The following is a 463-amino-acid chain: Bifunctional protein HldE (463 aa).

A ribokinase region spans residues 1-315 (MKKILVIGDL…LILNQTHPKI (315 aa)). Residue 191–194 (NRAE) coordinates ATP. Aspartate 260 is a catalytic residue. The tract at residues 334-463 (FTNGCFDLLH…IEKIKRTHND (130 aa)) is cytidylyltransferase.

The protein in the N-terminal section; belongs to the carbohydrate kinase PfkB family. In the C-terminal section; belongs to the cytidylyltransferase family. Homodimer.

The enzyme catalyses D-glycero-beta-D-manno-heptose 7-phosphate + ATP = D-glycero-beta-D-manno-heptose 1,7-bisphosphate + ADP + H(+). It carries out the reaction D-glycero-beta-D-manno-heptose 1-phosphate + ATP + H(+) = ADP-D-glycero-beta-D-manno-heptose + diphosphate. It functions in the pathway nucleotide-sugar biosynthesis; ADP-L-glycero-beta-D-manno-heptose biosynthesis; ADP-L-glycero-beta-D-manno-heptose from D-glycero-beta-D-manno-heptose 7-phosphate: step 1/4. It participates in nucleotide-sugar biosynthesis; ADP-L-glycero-beta-D-manno-heptose biosynthesis; ADP-L-glycero-beta-D-manno-heptose from D-glycero-beta-D-manno-heptose 7-phosphate: step 3/4. Functionally, catalyzes the phosphorylation of D-glycero-D-manno-heptose 7-phosphate at the C-1 position to selectively form D-glycero-beta-D-manno-heptose-1,7-bisphosphate. Catalyzes the ADP transfer from ATP to D-glycero-beta-D-manno-heptose 1-phosphate, yielding ADP-D-glycero-beta-D-manno-heptose. This chain is Bifunctional protein HldE, found in Helicobacter pylori (strain HPAG1).